A 317-amino-acid polypeptide reads, in one-letter code: Transaldolase (317 aa).

Lys132 acts as the Schiff-base intermediate with substrate in catalysis.

It belongs to the transaldolase family. Type 1 subfamily. As to quaternary structure, homodimer.

The protein localises to the cytoplasm. The catalysed reaction is D-sedoheptulose 7-phosphate + D-glyceraldehyde 3-phosphate = D-erythrose 4-phosphate + beta-D-fructose 6-phosphate. Its pathway is carbohydrate degradation; pentose phosphate pathway; D-glyceraldehyde 3-phosphate and beta-D-fructose 6-phosphate from D-ribose 5-phosphate and D-xylulose 5-phosphate (non-oxidative stage): step 2/3. In terms of biological role, transaldolase is important for the balance of metabolites in the pentose-phosphate pathway. This chain is Transaldolase, found in Yersinia pseudotuberculosis serotype O:1b (strain IP 31758).